The sequence spans 404 residues: Cysteine desulfurase IscS (404 aa).

Pyridoxal 5'-phosphate-binding positions include 75–76 (AT), asparagine 155, glutamine 183, and 203–205 (SGH). Lysine 206 bears the N6-(pyridoxal phosphate)lysine mark. Threonine 243 contacts pyridoxal 5'-phosphate. Cysteine 328 functions as the Cysteine persulfide intermediate in the catalytic mechanism. Cysteine 328 serves as a coordination point for [2Fe-2S] cluster.

The protein belongs to the class-V pyridoxal-phosphate-dependent aminotransferase family. NifS/IscS subfamily. Homodimer. Forms a heterotetramer with IscU, interacts with other sulfur acceptors. Requires pyridoxal 5'-phosphate as cofactor.

The protein localises to the cytoplasm. It catalyses the reaction (sulfur carrier)-H + L-cysteine = (sulfur carrier)-SH + L-alanine. Its pathway is cofactor biosynthesis; iron-sulfur cluster biosynthesis. In terms of biological role, master enzyme that delivers sulfur to a number of partners involved in Fe-S cluster assembly, tRNA modification or cofactor biosynthesis. Catalyzes the removal of elemental sulfur atoms from cysteine to produce alanine. Functions as a sulfur delivery protein for Fe-S cluster synthesis onto IscU, an Fe-S scaffold assembly protein, as well as other S acceptor proteins. The polypeptide is Cysteine desulfurase IscS (Klebsiella pneumoniae subsp. pneumoniae (strain ATCC 700721 / MGH 78578)).